The primary structure comprises 145 residues: D-aminoacyl-tRNA deacylase (145 aa).

The short motif at 137-138 (GP) is the Gly-cisPro motif, important for rejection of L-amino acids element.

It belongs to the DTD family. In terms of assembly, homodimer.

The protein localises to the cytoplasm. It carries out the reaction glycyl-tRNA(Ala) + H2O = tRNA(Ala) + glycine + H(+). The catalysed reaction is a D-aminoacyl-tRNA + H2O = a tRNA + a D-alpha-amino acid + H(+). In terms of biological role, an aminoacyl-tRNA editing enzyme that deacylates mischarged D-aminoacyl-tRNAs. Also deacylates mischarged glycyl-tRNA(Ala), protecting cells against glycine mischarging by AlaRS. Acts via tRNA-based rather than protein-based catalysis; rejects L-amino acids rather than detecting D-amino acids in the active site. By recycling D-aminoacyl-tRNA to D-amino acids and free tRNA molecules, this enzyme counteracts the toxicity associated with the formation of D-aminoacyl-tRNA entities in vivo and helps enforce protein L-homochirality. The sequence is that of D-aminoacyl-tRNA deacylase from Escherichia coli O139:H28 (strain E24377A / ETEC).